The chain runs to 115 residues: 5-hydroxyisourate hydrolase (115 aa).

The segment at 1 to 23 (MSGLTTHILDQASGKPAAGVGVR) is disordered. His7, Arg45, and Tyr112 together coordinate substrate.

Belongs to the transthyretin family. 5-hydroxyisourate hydrolase subfamily. As to quaternary structure, homotetramer.

The enzyme catalyses 5-hydroxyisourate + H2O = 5-hydroxy-2-oxo-4-ureido-2,5-dihydro-1H-imidazole-5-carboxylate + H(+). Its function is as follows. Catalyzes the hydrolysis of 5-hydroxyisourate (HIU) to 2-oxo-4-hydroxy-4-carboxy-5-ureidoimidazoline (OHCU). The sequence is that of 5-hydroxyisourate hydrolase from Caulobacter vibrioides (strain ATCC 19089 / CIP 103742 / CB 15) (Caulobacter crescentus).